A 177-amino-acid polypeptide reads, in one-letter code: ATP synthase subunit delta (177 aa).

This sequence belongs to the ATPase delta chain family. As to quaternary structure, F-type ATPases have 2 components, F(1) - the catalytic core - and F(0) - the membrane proton channel. F(1) has five subunits: alpha(3), beta(3), gamma(1), delta(1), epsilon(1). F(0) has three main subunits: a(1), b(2) and c(10-14). The alpha and beta chains form an alternating ring which encloses part of the gamma chain. F(1) is attached to F(0) by a central stalk formed by the gamma and epsilon chains, while a peripheral stalk is formed by the delta and b chains.

The protein resides in the cell membrane. F(1)F(0) ATP synthase produces ATP from ADP in the presence of a proton or sodium gradient. F-type ATPases consist of two structural domains, F(1) containing the extramembraneous catalytic core and F(0) containing the membrane proton channel, linked together by a central stalk and a peripheral stalk. During catalysis, ATP synthesis in the catalytic domain of F(1) is coupled via a rotary mechanism of the central stalk subunits to proton translocation. Functionally, this protein is part of the stalk that links CF(0) to CF(1). It either transmits conformational changes from CF(0) to CF(1) or is implicated in proton conduction. The sequence is that of ATP synthase subunit delta from Exiguobacterium sibiricum (strain DSM 17290 / CCUG 55495 / CIP 109462 / JCM 13490 / 255-15).